The sequence spans 207 residues: ATP synthase subunit b 2 (207 aa).

The helical transmembrane segment at 53 to 72 (TYASQLLWLVITFSVFYLLM) threads the bilayer.

This sequence belongs to the ATPase B chain family. As to quaternary structure, F-type ATPases have 2 components, F(1) - the catalytic core - and F(0) - the membrane proton channel. F(1) has five subunits: alpha(3), beta(3), gamma(1), delta(1), epsilon(1). F(0) has three main subunits: a(1), b(2) and c(10-14). The alpha and beta chains form an alternating ring which encloses part of the gamma chain. F(1) is attached to F(0) by a central stalk formed by the gamma and epsilon chains, while a peripheral stalk is formed by the delta and b chains.

It is found in the cell inner membrane. Its function is as follows. F(1)F(0) ATP synthase produces ATP from ADP in the presence of a proton or sodium gradient. F-type ATPases consist of two structural domains, F(1) containing the extramembraneous catalytic core and F(0) containing the membrane proton channel, linked together by a central stalk and a peripheral stalk. During catalysis, ATP synthesis in the catalytic domain of F(1) is coupled via a rotary mechanism of the central stalk subunits to proton translocation. Component of the F(0) channel, it forms part of the peripheral stalk, linking F(1) to F(0). The b'-subunit is a diverged and duplicated form of b found in plants and photosynthetic bacteria. This chain is ATP synthase subunit b 2 (atpF2), found in Rhizobium etli (strain CIAT 652).